Consider the following 20-residue polypeptide: Zinc metalloproteinase-disintegrin-like uracoina-1 (20 aa).

Belongs to the venom metalloproteinase (M12B) family. P-III subfamily. In terms of assembly, monomer. Zn(2+) serves as cofactor. As to expression, expressed by the venom gland.

The protein localises to the secreted. Inhibited by ethylenediaminetetraacetic acid (EDTA) and 1,10-phenanthroline. Not inhibited by tosyl-L-lysine chloromethyl ketone (TCLK) and phenylmethanesulfonylfluoride (PMSF). Functionally, snake venom zinc metalloprotease that possesses hemorrhagic activity (minimum hemorrhagic dose, MHD=4.7 ug) when injected intradermally into mice. Degrades the alpha-chain of fibrinogen (FGA). The sequence is that of Zinc metalloproteinase-disintegrin-like uracoina-1 from Crotalus vegrandis (Uracoan rattlesnake).